A 664-amino-acid chain; its full sequence is MSLQRIVRVSLEHPTSAVCVAGVETIVDIYGAVPEGTDMFEVYGTPGVDIYVSPSMERSRERADTRRWCFNKGLEIIVIMNSPSNDLNDSHVQIAYHSSREHLPLAYAVLYLTCVDITLDCDMNCADRQDRSFVDKRQWVWGPDGYGAILLVNCDRDNVDSNAQDNCDQYVRCLQDLEDMSVMVLRTQGPEALFEDHRLILHTSSCDAERARVFHVCGPEDSCESYKCVLGPDRMSYEVPRLKGYEERFFVEGLSFPDAGFPGLISFHVTLLDDSNEDFSETPIFTDTAVFRVAPWIMTPSTLPPLEVYVCRVRNNTCFVEAVEELARKAGCKLTICPQAENRNDRWIQDEMELGYVQAPHKTLPVVFDSPRNGELQGFPYKRILGLDFGYVTREPKDSSVSGLDSFGNLEVSPPVVANGKEYPLGRILIGGNLPGSRGRRVTQVVRNFLHAQKVQPLVELFVDWLAVGHVDEFLSFVPAPDGKGFRLLLASPGACFRLFQEKQKWGHGRSLLFEGVIGDRRVQTVSINQILNNQSLINFNKFAQSCIDWNREVLKRELGLAEGDIIDIPQLFKTEKRKAVAFFPDLVNMLVLGKHLGIPKPFGPIINGRCCLEEKVRSLLEPLGLHCTFIDDFTPYHMLHGEVHCGTNVRREPFAFKWWHMVP.

This sequence belongs to the protein arginine deiminase family. It depends on Ca(2+) as a cofactor. In terms of tissue distribution, epidermis and hair follicles.

The protein localises to the cytoplasm. It carries out the reaction L-arginyl-[protein] + H2O = L-citrullyl-[protein] + NH4(+). Functionally, catalyzes the deimination of arginine residues of proteins. The protein is Protein-arginine deiminase type-3 (Padi3) of Mus musculus (Mouse).